Reading from the N-terminus, the 306-residue chain is 2-dehydro-3-deoxy-D-gluconate/2-dehydro-3-deoxy-phosphogluconate aldolase (306 aa).

Substrate-binding positions include 61–62 (TT), 148–150 (YNY), and 173–175 (KDT). Lys173 acts as the Schiff-base intermediate with substrate in catalysis.

Belongs to the DapA family. KDPG aldolase subfamily. Homotetramer; dimer of dimers.

The enzyme catalyses 2-dehydro-3-deoxy-6-phospho-D-gluconate = D-glyceraldehyde 3-phosphate + pyruvate. It catalyses the reaction 2-dehydro-3-deoxy-D-gluconate = D-glyceraldehyde + pyruvate. It participates in carbohydrate acid metabolism; 2-dehydro-3-deoxy-D-gluconate degradation; D-glyceraldehyde 3-phosphate and pyruvate from 2-dehydro-3-deoxy-D-gluconate: step 2/2. In terms of biological role, involved in the degradation of glucose via the Entner-Doudoroff pathway. Catalyzes the reversible cleavage of 2-keto-3-deoxy-6-phosphogluconate (KDPG) and 2-keto-3-deoxygluconate (KDG) forming pyruvate and glyceraldehyde 3-phosphate or glyceraldehyde, respectively. It is not able to use 2-keto-3-deoxy-6-phosphogalactonate (KDPGal) and 2-keto-3-deoxygalactonate (KDGal) as substrate. The chain is 2-dehydro-3-deoxy-D-gluconate/2-dehydro-3-deoxy-phosphogluconate aldolase (kdgA) from Thermoproteus tenax.